Here is a 165-residue protein sequence, read N- to C-terminus: Anaphase-promoting complex subunit 11 (165 aa).

Residues 52-95 form an RING-type; atypical zinc finger; it reads CPSCKFPGDQCPLVIGLCHHNFHDHCIYRWLDTPTSKGLCPMCR.

As to quaternary structure, the APC/C is composed of at least 13 subunits that stay tightly associated throughout the cell cycle: APC1, APC2, APC4, APC5, APC9, APC11, CDC16, CDC23, CDC26, CDC27, DOC1, MND2 and SWM1.

The protein operates within protein modification; protein ubiquitination. Functionally, probably catalytic subunit of the anaphase promoting complex/cyclosome (APC/C), a cell cycle-regulated E3 ubiquitin-protein ligase complex that controls progression through mitosis and the G1 phase of the cell cycle. The APC/C is thought to confer substrate specificity and, in the presence of ubiquitin-conjugating E2 enzymes, it catalyzes the formation of protein-ubiquitin conjugates that are subsequently degraded by the 26S proteasome. In early mitosis, the APC/C is activated by CDC20 and targets securin PDS1, the B-type cyclin CLB5, and other anaphase inhibitory proteins for proteolysis, thereby triggering the separation of sister chromatids at the metaphase-to-anaphase transition. In late mitosis and in G1, degradation of CLB5 allows activation of the APC/C by CDH1, which is needed to destroy CDC20 and the B-type cyclin CLB2 to allow exit from mitosis and creating the low CDK state necessary for cytokinesis and for reforming prereplicative complexes in G1 prior to another round of replication. APC11 is required to recruit the ubiquitin-conjugating enzyme E2 to the APC/C. The sequence is that of Anaphase-promoting complex subunit 11 (APC11) from Saccharomyces cerevisiae (strain ATCC 204508 / S288c) (Baker's yeast).